The primary structure comprises 264 residues: Somatomedin-B and thrombospondin type-1 domain-containing protein (264 aa).

Positions 1-20 are cleaved as a signal peptide; sequence MRTLWMALCALSRLWPGAQA. One can recognise an SMB domain in the interval 24–75; it reads EAGRCCPGRDPACFARGWRLDRVYGTCFCDQACRFTGDCCFDYDRACPARPC. Disulfide bonds link C28-C36, C28-C52, C36-C70, C50-C52, C50-C63, C56-C62, and C63-C70. Residues 74-127 form the TSP type-1 domain; the sequence is PCFVGEWSPWSGCADQCKPTTRVRRRSVQQEPQNGGAPCPPLEERAGCLEYSTP. N227 is a glycosylation site (N-linked (GlcNAc...) asparagine).

The protein belongs to the thrombospondin family. In terms of tissue distribution, detected in aorta extracellular matrix (at protein level).

The protein localises to the secreted. It is found in the extracellular space. It localises to the extracellular matrix. This is Somatomedin-B and thrombospondin type-1 domain-containing protein (SBSPON) from Homo sapiens (Human).